Consider the following 377-residue polypeptide: Succinyl-diaminopimelate desuccinylase (377 aa).

Position 68 (His68) interacts with Zn(2+). Asp70 is an active-site residue. Asp101 lines the Zn(2+) pocket. Glu135 functions as the Proton acceptor in the catalytic mechanism. The Zn(2+) site is built by Glu136, Glu164, and His350.

Belongs to the peptidase M20A family. DapE subfamily. In terms of assembly, homodimer. Zn(2+) is required as a cofactor. Co(2+) serves as cofactor.

It carries out the reaction N-succinyl-(2S,6S)-2,6-diaminopimelate + H2O = (2S,6S)-2,6-diaminopimelate + succinate. It participates in amino-acid biosynthesis; L-lysine biosynthesis via DAP pathway; LL-2,6-diaminopimelate from (S)-tetrahydrodipicolinate (succinylase route): step 3/3. Its function is as follows. Catalyzes the hydrolysis of N-succinyl-L,L-diaminopimelic acid (SDAP), forming succinate and LL-2,6-diaminopimelate (DAP), an intermediate involved in the bacterial biosynthesis of lysine and meso-diaminopimelic acid, an essential component of bacterial cell walls. This is Succinyl-diaminopimelate desuccinylase from Acinetobacter baylyi (strain ATCC 33305 / BD413 / ADP1).